Here is a 65-residue protein sequence, read N- to C-terminus: UPF0434 protein BBta_0300 (65 aa).

This sequence belongs to the UPF0434 family.

In Bradyrhizobium sp. (strain BTAi1 / ATCC BAA-1182), this protein is UPF0434 protein BBta_0300.